We begin with the raw amino-acid sequence, 435 residues long: Zinc finger CCCH domain-containing protein 67 (435 aa).

The tract at residues 1 to 91 (MSKPEETSDP…DQKEEEEGSE (91 aa)) is disordered. 3 consecutive C3H1-type zinc fingers follow at residues 101–129 (RPDS…HPVR), 148–176 (NPKL…HMKE), and 194–222 (RPGE…HPDP). The interval 235–274 (GNNGGSFSPKAPSQASSTSWSSTRHMNGTGTAPFIPSMFP) is disordered. Positions 247-256 (SQASSTSWSS) are enriched in low complexity. 2 C3H1-type zinc fingers span residues 334-362 (RPDQ…HPKN) and 380-408 (RPDQ…HSIP). The disordered stretch occupies residues 412–435 (SPSSSQTVEARQVGANGNEDDSWH).

It localises to the nucleus. This is Zinc finger CCCH domain-containing protein 67 from Arabidopsis thaliana (Mouse-ear cress).